Consider the following 622-residue polypeptide: Coiled-coil domain-containing protein 17 (622 aa).

Coiled-coil stretches lie at residues 81–102 (RSAL…QEMR), 146–207 (ARRV…LEVL), and 294–320 (GELP…RGRA). Disordered regions lie at residues 334-356 (SLQP…PLPP) and 584-622 (PAVG…PVSF). Residues 344–356 (PLLPPPVAPPLPP) show a composition bias toward pro residues. Positions 593-615 (PRTEEPLSGVKDRDEGLGPHHSS) are enriched in basic and acidic residues.

This is Coiled-coil domain-containing protein 17 (CCDC17) from Homo sapiens (Human).